We begin with the raw amino-acid sequence, 632 residues long: Phosphatidylinositol-3,5-bisphosphate 3-phosphatase MTMR8 (632 aa).

Residues 126–500 (GWELISVVND…LHFKFWCGMY (375 aa)) form the Myotubularin phosphatase domain. 3 residues coordinate a 1,2-diacyl-sn-glycero-3-phospho-(1D-myo-inositol-3,5-bisphosphate): Asn-250, Asn-275, and Ile-276. 3 residues coordinate a 1,2-diacyl-sn-glycero-3-phospho-(1D-myo-inositol-3-phosphate): Asn-250, Asn-275, and Ile-276. Cys-338 serves as the catalytic Phosphocysteine intermediate. Residues Ser-339, Asp-340, Gly-341, Trp-342, Asp-343, Arg-344, Lys-380, and Arg-384 each coordinate a 1,2-diacyl-sn-glycero-3-phospho-(1D-myo-inositol-3,5-bisphosphate). A 1,2-diacyl-sn-glycero-3-phospho-(1D-myo-inositol-3-phosphate)-binding residues include Ser-339, Asp-340, Gly-341, Trp-342, Asp-343, and Arg-344. Residues Ser-339 and Asp-340 each contribute to the phosphate site. Residues Trp-342, Asp-343, and Arg-344 each coordinate phosphate. Arg-384 provides a ligand contact to a 1,2-diacyl-sn-glycero-3-phospho-(1D-myo-inositol-3-phosphate). Positions 545–632 (LPDPAGPINT…HSKEEVQESS (88 aa)) are disordered. Over residues 602-632 (EPAANEHDLSSKDKPVFVETEHSKEEVQESS) the composition is skewed to basic and acidic residues.

It belongs to the protein-tyrosine phosphatase family. Non-receptor class myotubularin subfamily. Homodimer.

Its subcellular location is the nucleus envelope. The catalysed reaction is a 1,2-diacyl-sn-glycero-3-phospho-(1D-myo-inositol-3,5-bisphosphate) + H2O = a 1,2-diacyl-sn-glycero-3-phospho-(1D-myo-inositol-5-phosphate) + phosphate. The enzyme catalyses a 1,2-diacyl-sn-glycero-3-phospho-(1D-myo-inositol-3-phosphate) + H2O = a 1,2-diacyl-sn-glycero-3-phospho-(1D-myo-inositol) + phosphate. It catalyses the reaction 1,2-dioctanoyl-sn-glycero-3-phospho-(1D-myo-inositol-3,5-bisphosphate) + H2O = 1,2-dioctanoyl-sn-glycero-3-phospho-(1D-myo-inositol-5-phosphate) + phosphate. Functionally, lipid phosphatase that specifically dephosphorylates the D-3 position of phosphatidylinositol 3-phosphate and phosphatidylinositol 3,5-bisphosphate, generating phosphatidylinositol and phosphatidylinositol 5-phosphate. In Danio rerio (Zebrafish), this protein is Phosphatidylinositol-3,5-bisphosphate 3-phosphatase MTMR8 (mtmr8).